The chain runs to 339 residues: Methylthioribose-1-phosphate isomerase (339 aa).

Substrate is bound by residues 52-54 (RGA), Arg89, and Gln188. Asp229 functions as the Proton donor in the catalytic mechanism. 239-240 (NK) lines the substrate pocket.

This sequence belongs to the eIF-2B alpha/beta/delta subunits family. MtnA subfamily.

It carries out the reaction 5-(methylsulfanyl)-alpha-D-ribose 1-phosphate = 5-(methylsulfanyl)-D-ribulose 1-phosphate. It participates in amino-acid biosynthesis; L-methionine biosynthesis via salvage pathway; L-methionine from S-methyl-5-thio-alpha-D-ribose 1-phosphate: step 1/6. Catalyzes the interconversion of methylthioribose-1-phosphate (MTR-1-P) into methylthioribulose-1-phosphate (MTRu-1-P). This Anaeromyxobacter dehalogenans (strain 2CP-C) protein is Methylthioribose-1-phosphate isomerase.